The sequence spans 310 residues: Ceramide synthase LOH1 (310 aa).

6 helical membrane passes run 16 to 36, 85 to 105, 131 to 151, 157 to 177, 216 to 236, and 260 to 280; these read SFPTYQDLGFLPLFAVFFPTI, CIYYLSAELLALSVTYNEPWF, FLYMFAAGFYTYSIFALVFWE, FGVSMGHHITTLVLIVLSYIC, FVLFALSWVVLRLIYYPFWIL, and YMFNTLLYFLLVLHIFWWVLI. A TLC domain is found at 76-289; the sequence is RKFKESAWKC…IYRMLVKQVQ (214 aa). 2 positions are modified to phosphoserine: S300 and S302.

Expressed ubiquitously at high levels. Not observed in pollen.

The protein resides in the endoplasmic reticulum membrane. It catalyses the reaction (4R)-hydroxysphinganine + a fatty acyl-CoA = an N-acyl-(4R)-4-hydroxysphinganine + CoA + H(+). It carries out the reaction hexacosanoyl-CoA + (4R)-hydroxysphinganine = N-hexacosanoyl-(4R)-hydroxysphinganine + CoA + H(+). The enzyme catalyses tetracosanoyl-CoA + (4R)-hydroxysphinganine = N-tetracosanoyl-(4R)-hydroxysphinganine + CoA + H(+). It functions in the pathway sphingolipid metabolism. With respect to regulation, inhibited by the mycotoxin fumonisin B(1), a sphingosine analog mycotoxins produced by pathogenic fungi. Repressed by divalent cation such as magnesium Mg(2+), copper Cu(2+), zinc Zn(2+), manganese Mn(2+), calcium Ca(2+) and cobalt Co(2+). Its function is as follows. Essential for plant growth, promotes cell division in root meristems. Catalyzes the biosynthesis of ceramide sphingolipids with C(16) to C(28) fatty acids, structural membrane lipids involved in membrane trafficking (e.g. early endosomes) and cell polarity (e.g. polar auxin transport related proteins); mostly active with t18:0 and saturated very long saturated fatty acids (C24:0 and C26:0), such as long-chain base (LCB) phytosphingosine (t18:0), lignoceroyl- and hexacosanoyl-CoAs. Mediates resistance to sphinganine-analog mycotoxins (SAMs, e.g. fumonisin B(1)) by restoring the sphingolipid biosynthesis. Could salvage the transport of GPI-anchored proteins from the endoplasmic reticulum to the Golgi apparatus in ceramides-depleted cells after SAM exposure. May prevent precocious cell death by delaying PR1 accumulation during aging. Contributes to hypoxic conditions tolerance (e.g. submergences), especially in the dark, by promoting the formation of very-long-chain (VLC) ceramide species (22:1, 24:1 and 26:1) and of VLC unsaturated ceramides, which are modulating CTR1-mediated ethylene signaling leading to endoplasmic reticulum (ER)-to-nucleus translocation of EIN2 and EIN3. The sequence is that of Ceramide synthase LOH1 from Arabidopsis thaliana (Mouse-ear cress).